A 215-amino-acid polypeptide reads, in one-letter code: Ribose-5-phosphate isomerase A (215 aa).

Residues 26 to 29 (TGST), 79 to 82 (DGAD), and 92 to 95 (KGGG) each bind substrate. The active-site Proton acceptor is the Glu101. A substrate-binding site is contributed by Lys119.

This sequence belongs to the ribose 5-phosphate isomerase family. As to quaternary structure, homodimer.

The catalysed reaction is aldehydo-D-ribose 5-phosphate = D-ribulose 5-phosphate. It functions in the pathway carbohydrate degradation; pentose phosphate pathway; D-ribose 5-phosphate from D-ribulose 5-phosphate (non-oxidative stage): step 1/1. Catalyzes the reversible conversion of ribose-5-phosphate to ribulose 5-phosphate. This is Ribose-5-phosphate isomerase A from Stenotrophomonas maltophilia (strain R551-3).